A 431-amino-acid polypeptide reads, in one-letter code: MAVLPTWLLAMMCLLFFVGAMENTTHDNISSLPRSDETEWNQHAVTNPDEVADEVLALTEMSVRNHTERRKLGYFTCGTGNPIDDCWRCDPNWHKNRKRLADCGIGFGRNAIGGRDGRFYVVTDPRDDNPVNPRPGTLRHAVIQDRPLWIVFKRDMVIQLKQELIVNSFKTIDGRGANVHIANGGCITIQFVTNVIVHGLHIHDCKPTGNAMVRSSETHFGWRTMADGDAISIFGSSHVWIDHNSLSHCADGLVDAVMGSTAITISNNHLTHHNEVMLLGHSDSYMRDKAMQVTIAYNHFGVGLIQRMPRCRHGYFHVVNNDYTHWEMYAIGGSANPTINSQGNRYAAPKNPFAKEVTKRVDTPASHWKGWNWRSEGDLLQNGAYFTSSGAAASGSYARASSLSAKSSSLVGHITSDAGALPCRRGRQCSS.

The signal sequence occupies residues 1–20; that stretch reads MAVLPTWLLAMMCLLFFVGA. 3 N-linked (GlcNAc...) asparagine glycosylation sites follow: asparagine 23, asparagine 28, and asparagine 65. Ca(2+) is bound by residues aspartate 227, aspartate 251, and aspartate 255. Residue arginine 307 is part of the active site.

Belongs to the polysaccharide lyase 1 family. The cofactor is Ca(2+). In terms of tissue distribution, expressed in flowers, but not in leaves.

The enzyme catalyses Eliminative cleavage of (1-&gt;4)-alpha-D-galacturonan to give oligosaccharides with 4-deoxy-alpha-D-galact-4-enuronosyl groups at their non-reducing ends.. It functions in the pathway glycan metabolism; pectin degradation; 2-dehydro-3-deoxy-D-gluconate from pectin: step 2/5. The protein is Probable pectate lyase 1 of Arabidopsis thaliana (Mouse-ear cress).